Consider the following 660-residue polypeptide: Bifunctional polymyxin resistance protein ArnA (660 aa).

Residues 1–304 (MKTVVFAYHD…TLGLVQGSRL (304 aa)) are formyltransferase ArnAFT. 86-88 (HLI) provides a ligand contact to (6R)-10-formyltetrahydrofolate. Catalysis depends on histidine 104, which acts as the Proton donor; for formyltransferase activity. (6R)-10-formyltetrahydrofolate contacts are provided by residues arginine 114 and 136-140 (VKRAD). The dehydrogenase ArnADH stretch occupies residues 314 to 660 (RRTRVLILGV…RTVDLTDKPS (347 aa)). Residues aspartate 347 and 368 to 369 (DI) contribute to the NAD(+) site. UDP-alpha-D-glucuronate-binding positions include alanine 393, tyrosine 398, and 432–433 (TS). Glutamate 434 (proton acceptor; for decarboxylase activity) is an active-site residue. Residues arginine 460, asparagine 492, 526 to 535 (KLIDGGKQKR), and tyrosine 613 each bind UDP-alpha-D-glucuronate. Arginine 619 acts as the Proton donor; for decarboxylase activity in catalysis.

It in the N-terminal section; belongs to the Fmt family. UDP-L-Ara4N formyltransferase subfamily. The protein in the C-terminal section; belongs to the NAD(P)-dependent epimerase/dehydratase family. UDP-glucuronic acid decarboxylase subfamily. Homohexamer, formed by a dimer of trimers.

The catalysed reaction is UDP-alpha-D-glucuronate + NAD(+) = UDP-beta-L-threo-pentopyranos-4-ulose + CO2 + NADH. It catalyses the reaction UDP-4-amino-4-deoxy-beta-L-arabinose + (6R)-10-formyltetrahydrofolate = UDP-4-deoxy-4-formamido-beta-L-arabinose + (6S)-5,6,7,8-tetrahydrofolate + H(+). It participates in nucleotide-sugar biosynthesis; UDP-4-deoxy-4-formamido-beta-L-arabinose biosynthesis; UDP-4-deoxy-4-formamido-beta-L-arabinose from UDP-alpha-D-glucuronate: step 1/3. It functions in the pathway nucleotide-sugar biosynthesis; UDP-4-deoxy-4-formamido-beta-L-arabinose biosynthesis; UDP-4-deoxy-4-formamido-beta-L-arabinose from UDP-alpha-D-glucuronate: step 3/3. The protein operates within bacterial outer membrane biogenesis; lipopolysaccharide biosynthesis. Its function is as follows. Bifunctional enzyme that catalyzes the oxidative decarboxylation of UDP-glucuronic acid (UDP-GlcUA) to UDP-4-keto-arabinose (UDP-Ara4O) and the addition of a formyl group to UDP-4-amino-4-deoxy-L-arabinose (UDP-L-Ara4N) to form UDP-L-4-formamido-arabinose (UDP-L-Ara4FN). The modified arabinose is attached to lipid A and is required for resistance to polymyxin and cationic antimicrobial peptides. This chain is Bifunctional polymyxin resistance protein ArnA, found in Escherichia coli O157:H7.